The sequence spans 27 residues: VYGMLFKFLAKKVAKKLISHVAKKQLQ.

Glutamine 27 is modified (glutamine amide).

Expressed by the venom gland.

It localises to the secreted. This is Cupiennin-4b from Cupiennius salei (American wandering spider).